The primary structure comprises 101 residues: MAITKMSSLIILSLMMLTFIYIPMISGQFRGIKQCEMKCYSTPECNATCLHEGYEEGKCLKSWDGGVECCCLGLLASSHQDSSPISSPHYIIFHGICILNI.

The N-terminal stretch at 1–27 (MAITKMSSLIILSLMMLTFIYIPMISG) is a signal peptide. 4 disulfides stabilise this stretch: C35/C71, C39/C59, C45/C69, and C49/C70.

It belongs to the DEFL family.

Its subcellular location is the secreted. In Arabidopsis thaliana (Mouse-ear cress), this protein is Putative defensin-like protein 86 (LCR82).